We begin with the raw amino-acid sequence, 966 residues long: Dynamin-like GTPase OPA1, mitochondrial (966 aa).

The N-terminal 86 residues, 1 to 86 (MLRAGSVVTC…GGHGYQQHRT (86 aa)), are a transit peptide targeting the mitochondrion. Residues 87-95 (FWVARLAAR) lie on the Mitochondrial matrix side of the membrane. A helical membrane pass occupies residues 96–112 (LLKLRYILLGSAVGGGY). Topologically, residues 113-776 (TAKKTYDEWK…SVIADMVGPD (664 aa)) are mitochondrial intermembrane. A disordered region spans residues 189 to 217 (ESALRAPDVPPASAAMADSGDKQFKKSSD). Positions 207–217 (SGDKQFKKSSD) are enriched in basic and acidic residues. Positions 213–259 (KKSSDKEKVDQLQEELLRTQLKYQRMLERLEKENKELRKVVLQKDDK) form a coiled coil. The region spanning 291 to 567 (QDHLPRVVVV…FWKMVRESVE (277 aa)) is the Dynamin-type G domain. The G1 motif stretch occupies residues 301-308 (GDQSAGKT). The GTP site is built by Ser-304, Gly-306, Lys-307, Thr-308, Ser-309, and Gly-323. Thr-308 contributes to the Mg(2+) binding site. The interval 327–330 (MMTR) is G2 motif. 2 residues coordinate Mg(2+): Thr-329 and Asp-404. Residues 404–407 (DLPG) are G3 motif. The tract at residues 473-476 (TKVD) is G4 motif. Residues Lys-474, Asp-476, and Thr-509 each contribute to the GTP site. A G5 motif region spans residues 507–510 (VVTG). Stalk region regions lie at residues 595–842 (DRNE…IKDT) and 880–934 (CNDV…VQLI). The paddle region stretch occupies residues 742 to 862 (TDKPQWDAAI…QKALLHCNLC (121 aa)). An intramembrane segment occupies 777 to 787 (WKQRWMSWKNR). The Mitochondrial intermembrane segment spans residues 788 to 966 (TPEQHTRNET…AFIEALHKEK (179 aa)). The cysteines at positions 862 and 880 are disulfide-linked. Positions 901–966 (RQQLTNTEVR…AFIEALHKEK (66 aa)) form a coiled coil.

Belongs to the TRAFAC class dynamin-like GTPase superfamily. Dynamin/Fzo/YdjA family. As to quaternary structure, oligomeric complex consisting of membrane-bound and soluble forms of OPA1. Cleaved by OMA1 or YME1L downstream of the transmembrane region in response to different signals to generate soluble forms. Cleaved by OMA1 at position S1 following stress conditions, generating the short soluble form (Dynamin-like GTPase OPA1, short form; S-OPA1).

It is found in the mitochondrion inner membrane. The protein localises to the mitochondrion intermembrane space. It catalyses the reaction GTP + H2O = GDP + phosphate + H(+). Dynamin-related GTPase that is essential for normal mitochondrial morphology by mediating fusion of the mitochondrial inner membranes, regulating cristae morphology and maintaining respiratory chain function. Exists in two forms: the transmembrane, long form (Dynamin-like GTPase OPA1, long form; L-OPA1), which is tethered to the inner mitochondrial membrane, and the short soluble form (Dynamin-like GTPase OPA1, short form; S-OPA1), which results from proteolytic cleavage and localizes in the intermembrane space. Both forms (L-OPA1 and S-OPA1) cooperate to catalyze the fusion of the mitochondrial inner membrane. The equilibrium between L-OPA1 and S-OPA1 is essential: excess levels of S-OPA1, produced by cleavage by OMA1 following loss of mitochondrial membrane potential, lead to an impaired equilibrium between L-OPA1 and S-OPA1, inhibiting mitochondrial fusion. The balance between L-OPA1 and S-OPA1 also influences cristae shape and morphology. Its role in mitochondrial morphology is required for mitochondrial genome maintenance. Its function is as follows. Constitutes the transmembrane long form (L-OPA1) that plays a central role in mitochondrial inner membrane fusion and cristae morphology. L-OPA1 and the soluble short form (S-OPA1) form higher-order helical assemblies that coordinate the fusion of mitochondrial inner membranes. Inner membrane-anchored L-OPA1 molecules initiate membrane remodeling by recruiting soluble S-OPA1 to rapidly polymerize into a flexible cylindrical scaffold encaging the mitochondrial inner membrane. Once at the membrane surface, the formation of S-OPA1 helices induce bilayer curvature. OPA1 dimerization through the paddle region, which inserts into cardiolipin-containing membrane, promotes GTP hydrolysis and the helical assembly of a flexible OPA1 lattice on the membrane, which drives membrane curvature and mitochondrial fusion. Plays a role in the maintenance and remodeling of mitochondrial cristae, some invaginations of the mitochondrial inner membrane that provide an increase in the surface area. Probably acts by forming helical filaments at the inside of inner membrane tubes with the shape and dimensions of crista junctions. Functionally, constitutes the soluble short form (S-OPA1) generated by cleavage by OMA1, which plays a central role in mitochondrial inner membrane fusion and cristae morphology. The transmembrane long form (L-OPA1) and the S-OPA1 form higher-order helical assemblies that coordinate the fusion of mitochondrial inner membranes. Inner membrane-anchored L-OPA1 molecules initiate membrane remodeling by recruiting soluble S-OPA1 to rapidly polymerize into a flexible cylindrical scaffold encaging the mitochondrial inner membrane. Once at the membrane surface, the formation of S-OPA1 helices induce bilayer curvature. OPA1 dimerization through the paddle region, which inserts into cardiolipin-containing membrane, promotes GTP hydrolysis and the helical assembly of a flexible OPA1 lattice on the membrane, which drives membrane curvature and mitochondrial fusion. Excess levels of S-OPA1 produced by cleavage by OMA1 following stress conditions that induce loss of mitochondrial membrane potential, lead to an impaired equilibrium between L-OPA1 and S-OPA1, thereby inhibiting mitochondrial fusion. Plays a role in the maintenance and remodeling of mitochondrial cristae, some invaginations of the mitochondrial inner membrane that provide an increase in the surface area. Probably acts by forming helical filaments at the inside of inner membrane tubes with the shape and dimensions of crista junctions. The sequence is that of Dynamin-like GTPase OPA1, mitochondrial from Danio rerio (Zebrafish).